The sequence spans 180 residues: MAELATIARPYAEALFKACAAQPGADLGSTVAWVDELAAIAADPQVRQLADNPKIESGQLFDLIAGVVRAPLSDAARNFLRVLIDNGRLEALPEVAAQFRALVNRQSGSSDAVVHSAFPIDAAALAELGASLEKRFGRKLNLSVQLDESLIGGVRVAVGDEVLDTSVKARLEQMKAALVA.

This sequence belongs to the ATPase delta chain family. F-type ATPases have 2 components, F(1) - the catalytic core - and F(0) - the membrane proton channel. F(1) has five subunits: alpha(3), beta(3), gamma(1), delta(1), epsilon(1). F(0) has three main subunits: a(1), b(2) and c(10-14). The alpha and beta chains form an alternating ring which encloses part of the gamma chain. F(1) is attached to F(0) by a central stalk formed by the gamma and epsilon chains, while a peripheral stalk is formed by the delta and b chains.

It localises to the cell inner membrane. F(1)F(0) ATP synthase produces ATP from ADP in the presence of a proton or sodium gradient. F-type ATPases consist of two structural domains, F(1) containing the extramembraneous catalytic core and F(0) containing the membrane proton channel, linked together by a central stalk and a peripheral stalk. During catalysis, ATP synthesis in the catalytic domain of F(1) is coupled via a rotary mechanism of the central stalk subunits to proton translocation. In terms of biological role, this protein is part of the stalk that links CF(0) to CF(1). It either transmits conformational changes from CF(0) to CF(1) or is implicated in proton conduction. The polypeptide is ATP synthase subunit delta (Paracidovorax citrulli (strain AAC00-1) (Acidovorax citrulli)).